We begin with the raw amino-acid sequence, 236 residues long: MALVPYEETTEFGLQKFHKPLKTFSFANHTIQIRQDWRHLGVAAVVWDAAIVLSTYLEMGAVELRGRSAVELGAGTGLVGIVAALLALKSSMKPLLVHCLLFFSGAHVTITDRKVALEFLKSNVQANLPPHIQPKTVVKELTWGQNLGSFSPGEFDLILGADIIYLEETFTDLLQTLEHLCSNHSVILLACRIRYERDNNFLAMLERQFTVRKVHYDPEKDVHIYEAQKRNQKEDL.

S-adenosyl-L-methionine contacts are provided by residues tryptophan 47, 73 to 75 (GAG), aspartate 112, tryptophan 143, and alanine 161.

Belongs to the methyltransferase superfamily. METTL21 family. As to quaternary structure, interacts with heat shock 70 family members; at least some of these proteins are methylation substrates.

The protein resides in the cytoplasm. It carries out the reaction L-lysyl-[protein] + 3 S-adenosyl-L-methionine = N(6),N(6),N(6)-trimethyl-L-lysyl-[protein] + 3 S-adenosyl-L-homocysteine + 3 H(+). Protein-lysine methyltransferase that selectively trimethylates residues in heat shock protein 70 (HSP70) family members. Contributes to the in vivo trimethylation of Lys residues in HSPA1 and HSPA8. In vitro methylates 'Lys-561' in HSPA1, 'Lys-564' in HSPA2, 'Lys-585' in HSPA5, 'Lys-563' in HSPA6 and 'Lys-561' in HSPA8. The chain is Protein N-lysine methyltransferase METTL21A (METTL21A) from Pongo abelii (Sumatran orangutan).